Reading from the N-terminus, the 310-residue chain is Mitochondrial 2-oxodicarboxylate carrier 1 (310 aa).

The next 6 membrane-spanning stretches (helical) occupy residues 9–29, 78–97, 126–146, 179–199, 219–239, and 281–301; these read LPFI…LLVM, SHLY…KRAI, IYSG…FELV, GLEA…GIIF, LIAG…FDVV, and MRLA…MDFF. 3 Solcar repeats span residues 9–108, 120–204, and 213–300; these read LPFI…FQTF, MTQK…IRKL, and EKTR…VMDF.

This sequence belongs to the mitochondrial carrier (TC 2.A.29) family.

The protein resides in the mitochondrion inner membrane. In terms of biological role, transports C5-C7 oxodicarboxylates across the inner membranes of mitochondria. Can transport 2-oxoadipate, 2-oxoglutarate, adipate, glutarate, 2-oxopimelate, oxaloacetate, citrate and malate. The main physiological role is probably to supply 2-oxoadipate and 2-oxoglutarate from the mitochondrial matrix to the cytosol where they are used in the biosynthesis of lysine and glutamate, respectively, and in lysine catabolism. In Saccharomyces cerevisiae (strain ATCC 204508 / S288c) (Baker's yeast), this protein is Mitochondrial 2-oxodicarboxylate carrier 1 (ODC1).